The primary structure comprises 556 residues: Endoglucanase 22 (556 aa).

An N-terminal signal peptide occupies residues 1–33; it reads MSRGRARLQPPPPGTRTTTLAAVLVLVLLAVVA. Catalysis depends on Asp108, which acts as the Nucleophile. Active-site residues include His450, Asp502, and Glu511.

Belongs to the glycosyl hydrolase 9 (cellulase E) family.

Its subcellular location is the secreted. It carries out the reaction Endohydrolysis of (1-&gt;4)-beta-D-glucosidic linkages in cellulose, lichenin and cereal beta-D-glucans.. This is Endoglucanase 22 (GLU11) from Oryza sativa subsp. japonica (Rice).